Reading from the N-terminus, the 305-residue chain is Methionyl-tRNA formyltransferase (305 aa).

(6S)-5,6,7,8-tetrahydrofolate is bound at residue 111 to 114; it reads SLLP.

This sequence belongs to the Fmt family.

It carries out the reaction L-methionyl-tRNA(fMet) + (6R)-10-formyltetrahydrofolate = N-formyl-L-methionyl-tRNA(fMet) + (6S)-5,6,7,8-tetrahydrofolate + H(+). Its function is as follows. Attaches a formyl group to the free amino group of methionyl-tRNA(fMet). The formyl group appears to play a dual role in the initiator identity of N-formylmethionyl-tRNA by promoting its recognition by IF2 and preventing the misappropriation of this tRNA by the elongation apparatus. This Helicobacter acinonychis (strain Sheeba) protein is Methionyl-tRNA formyltransferase.